Reading from the N-terminus, the 134-residue chain is ATP synthase epsilon chain (134 aa).

Residues 94–104 are compositionally biased toward basic and acidic residues; that stretch reads AKLAKSRAESH. Residues 94–115 are disordered; that stretch reads AKLAKSRAESHLEEDDDNTDIN.

Belongs to the ATPase epsilon chain family. In terms of assembly, F-type ATPases have 2 components, CF(1) - the catalytic core - and CF(0) - the membrane proton channel. CF(1) has five subunits: alpha(3), beta(3), gamma(1), delta(1), epsilon(1). CF(0) has three main subunits: a, b and c.

The protein resides in the cell membrane. Produces ATP from ADP in the presence of a proton gradient across the membrane. The chain is ATP synthase epsilon chain from Staphylococcus epidermidis (strain ATCC 35984 / DSM 28319 / BCRC 17069 / CCUG 31568 / BM 3577 / RP62A).